We begin with the raw amino-acid sequence, 306 residues long: Prophage bactoprenol glucosyl transferase homolog (306 aa).

Residues 1–227 (MKISLVVPVF…ITSFSTFPLR (227 aa)) are Cytoplasmic-facing. The chain crosses the membrane as a helical span at residues 228 to 248 (IWTYIGLVVASVAFIYGAWMI). At 249 to 262 (LDTIIFGNAVRGYP) the chain is on the periplasmic side. Residues 263 to 283 (SLLVSILFLGGIQMIGIGVLG) traverse the membrane as a helical segment. At 284–306 (EYIGRTYIETKKRPKYIIKRVKK) the chain is on the cytoplasmic side.

This sequence belongs to the glycosyltransferase 2 family. GtrB subfamily.

The protein resides in the cell inner membrane. Functionally, involved in O antigen modification. Catalyzes the transfer of the glucose residue from UDP-glucose to a lipid carrier. This is Prophage bactoprenol glucosyl transferase homolog (yfdH) from Escherichia coli (strain K12).